A 315-amino-acid chain; its full sequence is Iron(3+)-hydroxamate-binding protein FhuD (315 aa).

Positions 1–23 are cleaved as a signal peptide; that stretch reads MTHIYKKLGAAFFALLLIAALAA. Cys-24 is lipidated: N-palmitoyl cysteine. Residue Cys-24 is the site of S-diacylglycerol cysteine attachment. The region spanning 60–315 is the Fe/B12 periplasmic-binding domain; the sequence is RVVVMADGYY…LEFITESLTK (256 aa).

It belongs to the bacterial solute-binding protein 8 family. In terms of assembly, the complex is composed of an ATP-binding protein (FhuC), two transmembrane proteins (FhuB and FhuG) and a solute-binding protein (FhuD or YxeB).

It localises to the cell membrane. The protein localises to the membrane raft. Functionally, part of the ABC transporter complex FhuCBGD involved in iron(3+)-hydroxamate import. Binds the iron(3+)-hydroxamate complex and transfers it to the membrane-bound permease. Required for the transport of ferrichrome and coprogen. The chain is Iron(3+)-hydroxamate-binding protein FhuD (fhuD) from Bacillus subtilis (strain 168).